Consider the following 966-residue polypeptide: Valine--tRNA ligase (966 aa).

The short motif at Pro48–His58 is the 'HIGH' region element. The stretch at Asp348 to Asp368 forms a coiled coil. Positions Lys566–Ser570 match the 'KMSKS' region motif. An ATP-binding site is contributed by Lys569. The stretch at Phe939–Tyr960 forms a coiled coil.

Belongs to the class-I aminoacyl-tRNA synthetase family. ValS type 1 subfamily. As to quaternary structure, monomer.

It is found in the cytoplasm. The enzyme catalyses tRNA(Val) + L-valine + ATP = L-valyl-tRNA(Val) + AMP + diphosphate. Its function is as follows. Catalyzes the attachment of valine to tRNA(Val). As ValRS can inadvertently accommodate and process structurally similar amino acids such as threonine, to avoid such errors, it has a 'posttransfer' editing activity that hydrolyzes mischarged Thr-tRNA(Val) in a tRNA-dependent manner. The polypeptide is Valine--tRNA ligase (Blochmanniella floridana).